The chain runs to 99 residues: Large ribosomal subunit protein eL30 (99 aa).

Belongs to the eukaryotic ribosomal protein eL30 family. In terms of assembly, part of the 50S ribosomal subunit.

This Pyrococcus furiosus (strain ATCC 43587 / DSM 3638 / JCM 8422 / Vc1) protein is Large ribosomal subunit protein eL30.